Here is a 480-residue protein sequence, read N- to C-terminus: Cysteine--tRNA ligase (480 aa).

Cys27 is a Zn(2+) binding site. The 'HIGH' region motif lies at Pro29–Asn39. Residues Cys221, His246, and Glu250 each coordinate Zn(2+). Residues Lys278 to Ser282 carry the 'KMSKS' region motif. Lys281 serves as a coordination point for ATP.

The protein belongs to the class-I aminoacyl-tRNA synthetase family. In terms of assembly, monomer. Zn(2+) serves as cofactor.

It is found in the cytoplasm. The enzyme catalyses tRNA(Cys) + L-cysteine + ATP = L-cysteinyl-tRNA(Cys) + AMP + diphosphate. This is Cysteine--tRNA ligase from Borrelia garinii subsp. bavariensis (strain ATCC BAA-2496 / DSM 23469 / PBi) (Borreliella bavariensis).